Here is a 294-residue protein sequence, read N- to C-terminus: Large ribosomal subunit protein uL4m (294 aa).

Residues 120-139 (VRGGGRKPWQQKGSGRARHG) form a disordered region. Arg-147 is subject to Omega-N-methylarginine.

Belongs to the universal ribosomal protein uL4 family. In terms of assembly, component of the mitochondrial ribosome large subunit (39S) which comprises a 16S rRNA and about 50 distinct proteins. Interacts with MIEF1 upstream open reading frame protein.

It localises to the mitochondrion. The protein is Large ribosomal subunit protein uL4m (MRPL4) of Bos taurus (Bovine).